Reading from the N-terminus, the 559-residue chain is 2-succinyl-5-enolpyruvyl-6-hydroxy-3-cyclohexene-1-carboxylate synthase (559 aa).

It belongs to the TPP enzyme family. MenD subfamily. Homodimer. Mg(2+) is required as a cofactor. The cofactor is Mn(2+). Thiamine diphosphate serves as cofactor.

It catalyses the reaction isochorismate + 2-oxoglutarate + H(+) = 5-enolpyruvoyl-6-hydroxy-2-succinyl-cyclohex-3-ene-1-carboxylate + CO2. The protein operates within quinol/quinone metabolism; 1,4-dihydroxy-2-naphthoate biosynthesis; 1,4-dihydroxy-2-naphthoate from chorismate: step 2/7. It participates in quinol/quinone metabolism; menaquinone biosynthesis. Its function is as follows. Catalyzes the thiamine diphosphate-dependent decarboxylation of 2-oxoglutarate and the subsequent addition of the resulting succinic semialdehyde-thiamine pyrophosphate anion to isochorismate to yield 2-succinyl-5-enolpyruvyl-6-hydroxy-3-cyclohexene-1-carboxylate (SEPHCHC). The sequence is that of 2-succinyl-5-enolpyruvyl-6-hydroxy-3-cyclohexene-1-carboxylate synthase from Cytophaga hutchinsonii (strain ATCC 33406 / DSM 1761 / CIP 103989 / NBRC 15051 / NCIMB 9469 / D465).